Here is a 201-residue protein sequence, read N- to C-terminus: MSGRSVRAETRSRAKDDIKKVMAAIERVRRWEKKWVTVGDTSLRIFKWVPVTETKQIYKPKGAGPAVRELKGFPTDVVLENARSVLLDFQDDNSNQSFLSDAYQSNTKVDSSSNSSPQHVSEAVSPSHPPYYRTEDSQPPTLGQESMEAEREASTTSSEVTDEPPTLIKEDVLSLSTQEEEEAIGAPPLKRVCTEHNSTVS.

The disordered stretch occupies residues 104 to 201 (QSNTKVDSSS…VCTEHNSTVS (98 aa)).

This sequence belongs to the BCL7 family.

The polypeptide is B-cell CLL/lymphoma 7 protein family member B-B (Danio rerio (Zebrafish)).